The sequence spans 411 residues: Anthranilate synthase component 1 (411 aa).

Residues Ser27 and Pro203 to Met205 each bind L-tryptophan. Gly237–Thr238 contributes to the chorismate binding site. Glu262 serves as a coordination point for Mg(2+). Residues Tyr350, Arg369, Gly382–Gly384, and Gly384 contribute to the chorismate site. Glu397 contacts Mg(2+).

This sequence belongs to the anthranilate synthase component I family. Heterotetramer consisting of two non-identical subunits: a beta subunit (TrpG) and a large alpha subunit (TrpE). It depends on Mg(2+) as a cofactor.

It catalyses the reaction chorismate + L-glutamine = anthranilate + pyruvate + L-glutamate + H(+). It participates in amino-acid biosynthesis; L-tryptophan biosynthesis; L-tryptophan from chorismate: step 1/5. Its activity is regulated as follows. Feedback inhibited by tryptophan. Functionally, part of a heterotetrameric complex that catalyzes the two-step biosynthesis of anthranilate, an intermediate in the biosynthesis of L-tryptophan. In the first step, the glutamine-binding beta subunit (TrpG) of anthranilate synthase (AS) provides the glutamine amidotransferase activity which generates ammonia as a substrate that, along with chorismate, is used in the second step, catalyzed by the large alpha subunit of AS (TrpE) to produce anthranilate. In the absence of TrpG, TrpE can synthesize anthranilate directly from chorismate and high concentrations of ammonia. In Archaeoglobus fulgidus (strain ATCC 49558 / DSM 4304 / JCM 9628 / NBRC 100126 / VC-16), this protein is Anthranilate synthase component 1 (trpE).